Here is a 685-residue protein sequence, read N- to C-terminus: Polyphosphate kinase (685 aa).

ATP is bound at residue N45. 2 residues coordinate Mg(2+): R375 and R405. H435 (phosphohistidine intermediate) is an active-site residue. ATP contacts are provided by Y468, R564, and H592.

The protein belongs to the polyphosphate kinase 1 (PPK1) family. Requires Mg(2+) as cofactor. Post-translationally, an intermediate of this reaction is the autophosphorylated ppk in which a phosphate is covalently linked to a histidine residue through a N-P bond.

The catalysed reaction is [phosphate](n) + ATP = [phosphate](n+1) + ADP. Its function is as follows. Catalyzes the reversible transfer of the terminal phosphate of ATP to form a long-chain polyphosphate (polyP). The sequence is that of Polyphosphate kinase from Neisseria meningitidis serogroup A / serotype 4A (strain DSM 15465 / Z2491).